Consider the following 334-residue polypeptide: Heme A synthase (334 aa).

A run of 5 helical transmembrane segments spans residues 6–26 (ITRWLFISCIMVILMIIIGGI), 93–113 (GRITTLIYIVPLICFYFQGVI), 119–139 (LPYIIALLLFCIQGFMGWYMV), 154–174 (LAFHLIIAVIIYHILFYQLIK), and 189–209 (LIFSCISITVIYIQIFLGALV). His253 contributes to the heme binding site. 3 consecutive transmembrane segments (helical) span residues 255 to 275 (LGGFSVFAVNAILVICLFKVK), 282 to 302 (IAYFLIIVLLIQIATGIITIV), and 305 to 325 (VPIIIASIHQFVAIILLSIII). His313 contacts heme.

The protein belongs to the COX15/CtaA family. Type 2 subfamily. Interacts with CtaB. It depends on heme b as a cofactor.

It localises to the cell membrane. The catalysed reaction is Fe(II)-heme o + 2 A + H2O = Fe(II)-heme a + 2 AH2. It participates in porphyrin-containing compound metabolism; heme A biosynthesis; heme A from heme O: step 1/1. Functionally, catalyzes the conversion of heme O to heme A by two successive hydroxylations of the methyl group at C8. The first hydroxylation forms heme I, the second hydroxylation results in an unstable dihydroxymethyl group, which spontaneously dehydrates, resulting in the formyl group of heme A. The chain is Heme A synthase from Rickettsia prowazekii (strain Madrid E).